The chain runs to 997 residues: Glutamate [NMDA] receptor subunit 1 (997 aa).

Positions 1 to 26 (MAVAGFVFCRPLFGLAIVLLVAPIDA) are cleaved as a signal peptide. The Extracellular portion of the chain corresponds to 27-573 (AQRHTASDNP…TLVSFLQPFS (547 aa)). N-linked (GlcNAc...) asparagine glycans are attached at residues N258, N314, N345, N397, N454, N481, and N501. Glycine is bound by residues 530–532 (PLT) and R537. A helical membrane pass occupies residues 574-594 (NTLWILVMVSVHVVALVLYLL). Topologically, residues 595 to 651 (DRFSPFGRFKLSHSDSNEEKALNLSSAVWFAWGVLLNSGIGEGTPRSFSARVLGMVW) are cytoplasmic. Residues 652–672 (AGFAMIIVASYTANLAAFLVL) traverse the membrane as a helical segment. Residues 673–831 (ERPKTKLSGI…KTPNTLGLKN (159 aa)) are Extracellular-facing. N693 is a glycosylation site (N-linked (GlcNAc...) asparagine). Residues S703 and D747 each contribute to the glycine site. The chain crosses the membrane as a helical span at residues 832–852 (MAGVFILVGVGIAGGVGLIII). The Cytoplasmic segment spans residues 853–997 (EVIYKKHQVK…YTSDVSHLVV (145 aa)). Residues 970-997 (LGKTRPQQSVLPPRYSPGYTSDVSHLVV) are disordered. Polar residues predominate over residues 987–997 (GYTSDVSHLVV).

This sequence belongs to the glutamate-gated ion channel (TC 1.A.10.1) family. As to quaternary structure, forms a heteromeric NMDA channel with Nmdar2.

Its subcellular location is the cell membrane. The protein localises to the postsynaptic cell membrane. It is found in the postsynaptic density. Its function is as follows. NMDA receptor subtype of glutamate-gated ion channels with high calcium permeability and voltage-dependent sensitivity to magnesium. Mediated by glycine. This protein plays a key role in synaptic plasticity, synaptogenesis, excitotoxicity, memory acquisition and learning. It mediates neuronal functions in glutamate neurotransmission. Is involved in the cell surface targeting of NMDA receptors. Plays a role in associative learning and in long-term memory consolidation. This is Glutamate [NMDA] receptor subunit 1 from Drosophila sechellia (Fruit fly).